Reading from the N-terminus, the 191-residue chain is Small ribosomal subunit protein eS7y (191 aa).

At Met1 the chain carries N-acetylmethionine. A coiled-coil region spans residues 17–50; that stretch reads TEFEEQVTQALFDLENTNQELKSELKDLYINQAV.

This sequence belongs to the eukaryotic ribosomal protein eS7 family.

The chain is Small ribosomal subunit protein eS7y (RPS7B) from Arabidopsis thaliana (Mouse-ear cress).